Reading from the N-terminus, the 411-residue chain is Calmodulin-binding receptor-like cytoplasmic kinase 2 (411 aa).

2 disordered regions span residues 1 to 44 (MPSR…DTTT) and 66 to 99 (SNYI…YGNA). Composition is skewed to low complexity over residues 16–44 (TTSS…DTTT) and 66–95 (SNYI…VQRS). Position 108 is a phosphothreonine (T108). A Protein kinase domain is found at 119–398 (FSPSFRIGQG…MKKCSEILWG (280 aa)). ATP contacts are provided by residues 125–133 (IGQGGFGTV) and K147. Residues 134-159 (YKVKLRDGKTFAVKRAKKSMHDDRQG) form a caM-binding region. The Proton acceptor role is filled by D247. A phosphoserine mark is found at S251 and S283. A phosphothreonine mark is found at T284 and T289. Y297 is modified (phosphotyrosine).

Belongs to the protein kinase superfamily. Ser/Thr protein kinase family. As to quaternary structure, interacts with calmodulin (CaM) in a Ca(2+)-dependent manner.

Its subcellular location is the cytoplasm. It carries out the reaction L-seryl-[protein] + ATP = O-phospho-L-seryl-[protein] + ADP + H(+). The enzyme catalyses L-threonyl-[protein] + ATP = O-phospho-L-threonyl-[protein] + ADP + H(+). This is Calmodulin-binding receptor-like cytoplasmic kinase 2 (CRCK2) from Arabidopsis thaliana (Mouse-ear cress).